Consider the following 733-residue polypeptide: MSTDSQCPVTGRANKHAARVGRMNRDWWPNQLNLKILHQHSPLSNPMGGNFNYSEEFKALDLAAVRNDIFELMTNSQDWWPADYGHYGPLFIRMAWHSAGTYRTGDGRGGARSGSQRFAPLNSWPDNANLDKARMLLWPIKQKYGKKISWADLLIFAGNCALESMGFKTFGFGGGREDIWEPGEDIYWGAEDTWLGDKRYSGERLLENPLAAVQMGLIYVNPEGPNGNPDPLAAAKDIRETFARMAMNDEETVALIAGGHTFGKCHGAGAATHVGPEPEGASIIEQGLGWKCSLGTGRGEHTITSGLEGAWTTNPVKWDNGFFDVLFSYDWALAKSPAGAHQWIPTDPAAKGTVPDAHNPAKRHAPMMLTTDLALKLDPIYGPISKRFHEQPDLFADAFARAWFKLTHRDMGPRACYLGPEVPAEDLIWQDPLPARNHELIDDQDIAELKGKIVTSGLSVSQLVSTAWASASTFRSSDRRGGANGARIRLAPQKDWEVNQPAQLKLVLETLEGIQKQFNSAQSGGKRVSIADLIVLGGCAAVELAARNAGHEIIVPFTPGRTDAAQEQTDVVAFAPLEPAADGFRNYLKTRYSVSAEELLVDRAQLLTLSAPEMTVLIGGMRVLDANADRSRHGVFTRRPGTLTNDFFVNLLDMGTTWNATSEAEDVFEGRDRVTGEMKWTGTRVDLIFGSNSLLRAQAEVYGCKDAQEKFVVDFIAAWSKVMNLDRFDIANS.

A cross-link (tryptophyl-tyrosyl-methioninium (Trp-Tyr) (with M-245)) is located at residues 96 to 219; it reads WHSAGTYRTG…LAAVQMGLIY (124 aa). Residue His97 is the Proton acceptor of the active site. The segment at residues 219–245 is a cross-link (tryptophyl-tyrosyl-methioninium (Tyr-Met) (with W-96)); the sequence is YVNPEGPNGNPDPLAAAKDIRETFARM. His260 serves as a coordination point for heme b.

Belongs to the peroxidase family. Peroxidase/catalase subfamily. In terms of assembly, homodimer or homotetramer. Heme b serves as cofactor. In terms of processing, formation of the three residue Trp-Tyr-Met cross-link is important for the catalase, but not the peroxidase activity of the enzyme.

The enzyme catalyses H2O2 + AH2 = A + 2 H2O. It carries out the reaction 2 H2O2 = O2 + 2 H2O. Functionally, bifunctional enzyme with both catalase and broad-spectrum peroxidase activity. This chain is Catalase-peroxidase, found in Geobacter sp. (strain M21).